The chain runs to 495 residues: ATP synthase subunit beta, chloroplastic (495 aa).

172-179 (GGAGVGKT) is a binding site for ATP.

The protein belongs to the ATPase alpha/beta chains family. F-type ATPases have 2 components, CF(1) - the catalytic core - and CF(0) - the membrane proton channel. CF(1) has five subunits: alpha(3), beta(3), gamma(1), delta(1), epsilon(1). CF(0) has four main subunits: a(1), b(1), b'(1) and c(9-12).

It is found in the plastid. It localises to the chloroplast thylakoid membrane. The catalysed reaction is ATP + H2O + 4 H(+)(in) = ADP + phosphate + 5 H(+)(out). Functionally, produces ATP from ADP in the presence of a proton gradient across the membrane. The catalytic sites are hosted primarily by the beta subunits. This is ATP synthase subunit beta, chloroplastic from Pteridium aquilinum (Bracken fern).